A 231-amino-acid polypeptide reads, in one-letter code: Large ribosomal subunit protein uL1 (231 aa).

Belongs to the universal ribosomal protein uL1 family. In terms of assembly, part of the 50S ribosomal subunit.

Functionally, binds directly to 23S rRNA. The L1 stalk is quite mobile in the ribosome, and is involved in E site tRNA release. In terms of biological role, protein L1 is also a translational repressor protein, it controls the translation of the L11 operon by binding to its mRNA. This Mycoplasmopsis agalactiae (strain NCTC 10123 / CIP 59.7 / PG2) (Mycoplasma agalactiae) protein is Large ribosomal subunit protein uL1.